Reading from the N-terminus, the 437-residue chain is Glycogen synthase (437 aa).

Lys15 is a binding site for ADP-alpha-D-glucose.

The protein belongs to the glycosyltransferase 1 family. Bacterial/plant glycogen synthase subfamily.

The enzyme catalyses [(1-&gt;4)-alpha-D-glucosyl](n) + ADP-alpha-D-glucose = [(1-&gt;4)-alpha-D-glucosyl](n+1) + ADP + H(+). The protein operates within glycan biosynthesis; glycogen biosynthesis. Synthesizes alpha-1,4-glucan chains using ADP-glucose. The chain is Glycogen synthase from Thermus thermophilus (strain ATCC BAA-163 / DSM 7039 / HB27).